Here is a 312-residue protein sequence, read N- to C-terminus: Ornithine carbamoyltransferase (312 aa).

Carbamoyl phosphate contacts are provided by residues 57–60, Q84, R108, and 135–138; these read STRT and HPCQ. L-ornithine is bound by residues N166, D226, and 230-231; that span reads SM. Carbamoyl phosphate is bound by residues 265–266 and R293; that span reads CL.

It belongs to the aspartate/ornithine carbamoyltransferase superfamily. OTCase family.

The protein localises to the cytoplasm. It carries out the reaction carbamoyl phosphate + L-ornithine = L-citrulline + phosphate + H(+). It functions in the pathway amino-acid degradation; L-arginine degradation via ADI pathway; carbamoyl phosphate from L-arginine: step 2/2. Functionally, reversibly catalyzes the transfer of the carbamoyl group from carbamoyl phosphate (CP) to the N(epsilon) atom of ornithine (ORN) to produce L-citrulline. This Brucella abortus (strain 2308) protein is Ornithine carbamoyltransferase.